Consider the following 460-residue polypeptide: Armadillo repeat-containing protein LFR (460 aa).

Over residues 1–10 the composition is skewed to low complexity; sequence MSHVRSAPAG. The interval 1-32 is disordered; it reads MSHVRSAPAGKSGGGGGSTPAKRGRPFGSTTG. ARM repeat units lie at residues 225 to 267, 321 to 360, and 364 to 405; these read ENET…NLAP, NEPF…NVAE, and DFRL…SLVS.

Interacts with CHR719, SWI3A and SWI3C. As to expression, expressed at low levels in coleoptiles, leaf tongues, mature leaves and nodes during the vegetative phase. Highly expressed in reproductive tissues such as young panicles, early developing seeds, embryos and endosperms.

It localises to the nucleus. In terms of biological role, plays critical roles in both embryo and endosperm development. Required for free nuclei division and cellularization in early endosperm development, by preventing premature cell death in the endosperm. Involved in the regulation of pattern formation and organ differentiation during embryogenesis, by regulating genes involved in the early stages of seed development. In Oryza sativa subsp. japonica (Rice), this protein is Armadillo repeat-containing protein LFR.